The sequence spans 324 residues: Zinc transporter ZIP1 (324 aa).

At 1-30 (MGPWGEPELLVWRPEAAASEAPVPMGLEVK) the chain is on the extracellular side. Residues 31 to 51 (LGALVLLLVLTLICSLVPVCV) form a helical membrane-spanning segment. The Cytoplasmic segment spans residues 52–68 (LRRPGANPEASASRQKA). Residues 69–89 (LSLVSCFAGGVFLATCLLDLL) form a helical membrane-spanning segment. Topologically, residues 90-104 (PDYLGAIDEALAALH) are extracellular. A helical membrane pass occupies residues 105–125 (VTLQFPLQEFILAMGFFLVLV). Residues 126–179 (MEQITLAYKEQSGPPPREETRALLGTVNGGPQHWHDGLGVPQAGGASSAPSALR) lie on the Cytoplasmic side of the membrane. Residues 180-200 (ACVLVFSLALHSVFEGLAVGL) form a helical membrane-spanning segment. The Extracellular portion of the chain corresponds to 201–206 (QRDQAR). A helical transmembrane segment spans residues 207–227 (AMELCLALLLHKGILAVSLSL). Residues 228 to 237 (RLLQSHLRAQ) lie on the Cytoplasmic side of the membrane. A helical transmembrane segment spans residues 238-258 (VVAGCGILFSCMTPLGIGLGT). At 259–272 (ALAESAGPLHQLAQ) the chain is on the extracellular side. Residues 273–293 (SVLEGMAAGTFLYITFLEILP) traverse the membrane as a helical segment. Topologically, residues 294 to 303 (QELATSEQRI) are cytoplasmic. A helical transmembrane segment spans residues 304 to 324 (LKVILLLAGFALLTGLLFIQI).

Belongs to the ZIP transporter (TC 2.A.5) family.

It localises to the cell membrane. Its subcellular location is the endoplasmic reticulum membrane. The enzyme catalyses Zn(2+)(in) = Zn(2+)(out). Functionally, transporter for the divalent cation Zn(2+). Mediates the influx of Zn(2+) into cells from extracellular space. This is Zinc transporter ZIP1 (SLC39A1) from Bos taurus (Bovine).